A 119-amino-acid chain; its full sequence is MHELSITEELLKTIVAKAEEAKARNVSRINLVIGEYAGVVEDSVKMCFEILSQDTIANGAVLEFSRIPAKFRCRLCGHTFPSGQNLLVCPECQGWNAEVIAGNEFFIESIEVDDESQSS.

His-2 contributes to the Ni(2+) binding site. 4 residues coordinate Zn(2+): Cys-73, Cys-76, Cys-89, and Cys-92.

It belongs to the HypA/HybF family.

Involved in the maturation of [NiFe] hydrogenases. Required for nickel insertion into the metal center of the hydrogenase. In Dehalococcoides mccartyi (strain CBDB1), this protein is Hydrogenase maturation factor HypA.